Consider the following 493-residue polypeptide: ATP synthase subunit beta, chloroplastic (493 aa).

170–177 (GGAGVGKT) serves as a coordination point for ATP.

It belongs to the ATPase alpha/beta chains family. As to quaternary structure, F-type ATPases have 2 components, CF(1) - the catalytic core - and CF(0) - the membrane proton channel. CF(1) has five subunits: alpha(3), beta(3), gamma(1), delta(1), epsilon(1). CF(0) has four main subunits: a(1), b(1), b'(1) and c(9-12).

The protein resides in the plastid. It localises to the chloroplast thylakoid membrane. It catalyses the reaction ATP + H2O + 4 H(+)(in) = ADP + phosphate + 5 H(+)(out). Its function is as follows. Produces ATP from ADP in the presence of a proton gradient across the membrane. The catalytic sites are hosted primarily by the beta subunits. The sequence is that of ATP synthase subunit beta, chloroplastic from Staurastrum punctulatum (Green alga).